Reading from the N-terminus, the 200-residue chain is UPF0301 protein Veis_1517 (200 aa).

Belongs to the UPF0301 (AlgH) family.

The chain is UPF0301 protein Veis_1517 from Verminephrobacter eiseniae (strain EF01-2).